The chain runs to 413 residues: MADSSSFPGTNPFLKVSTKDDKYSPIQKISEEEEYEVTSPTDPTFRSAHSGATAPTAGNSFNGDNGSNEGGEGIQFNRPFDAGFGQGSEGQGEHVEPPGGARPTAAANQGFPNNYALGRRTSVSAESLNPTSAGSDSWTPPCHPKTEEQLSRLKTAVSNNFLFSHLDDDQFRTVLDALVEKPIPAKDIKVISQGDAGDYFYIVENGHFDVYINPAGSVQPGPDGIGNKVSTIGPGGSFGELALMYNAPRAATIVSADPKSTLWALDRITFRRILMDSAFQRRRMYEAFLEEVPLLSSLKPYERAKIADALDAIKYPAGSTIIEEGAPGDAFYLLESGEAEAFKKDVEGPVKSYRRGDFFGELALLDDKPRAASVVAKTDVKVARLGRDGFKRLLGPVEDIMRRAEYSAKPSPS.

A disordered region spans residues Met-1–Lys-145. The segment at Ser-24–Phe-161 is dimerization and phosphorylation. A compositionally biased stretch (low complexity) spans Gly-58–Ser-67. A compositionally biased stretch (polar residues) spans Thr-121–Trp-138. Ser-122 carries the phosphoserine modification. 3',5'-cyclic AMP is bound by residues Leu-162 to Glu-291, Glu-240, Arg-249, Leu-294 to Ser-413, Glu-361, and Arg-370.

It belongs to the cAMP-dependent kinase regulatory chain family. Tetramer, composed of 2 regulatory (R) and 2 catalytic (C) subunits. In the presence of cAMP it dissociates into 2 active monomeric C subunits and an R dimer.

In Aspergillus fumigatus (strain ATCC MYA-4609 / CBS 101355 / FGSC A1100 / Af293) (Neosartorya fumigata), this protein is cAMP-dependent protein kinase regulatory subunit (pkaR).